Consider the following 343-residue polypeptide: MSNIDKEKAVAAALAQIEKSYGKGSVMKLGQRPNVDIESVSTGSLGLDIALGIGGVPKGRIIEIFGPESSGKTTLTLHLIAEAQKKGGTCAFIDAEHALDPAYAKKLGVNIDELIISQPDTGEQALEIADTLIRSGGIDMIIIDSVAALVPKSEIEGEMGDAQMASQARLMSQALRKLTASINRTNCITVFINQIRMKIGVMFGSPETTTGGNALKFYASVRIDIRRIGSIKDKEEVIGSQTKVKVVKNKVSPPFKTADFDIMYGSGISKEGEIIDLGVKLDIIEKSGSWFSYNSVRIGQGRENVKQYLKDNPKISNEIEKLVREKSSKVTNINFEQEEEVND.

66 to 73 is a binding site for ATP; sequence GPESSGKT.

Belongs to the RecA family.

The protein resides in the cytoplasm. Functionally, can catalyze the hydrolysis of ATP in the presence of single-stranded DNA, the ATP-dependent uptake of single-stranded DNA by duplex DNA, and the ATP-dependent hybridization of homologous single-stranded DNAs. It interacts with LexA causing its activation and leading to its autocatalytic cleavage. In Rickettsia bellii (strain OSU 85-389), this protein is Protein RecA.